Here is a 758-residue protein sequence, read N- to C-terminus: G-protein alpha subunit activating protein gbas-1 (758 aa).

A compositionally biased stretch (acidic residues) spans 30–48 (LDEVDNADFEREDDEEEVL). Residues 30-70 (LDEVDNADFEREDDEEEVLSEPSESPYTSTPKSSKRVNKTR) are disordered. Over residues 49 to 61 (SEPSESPYTSTPK) the composition is skewed to low complexity. Positions 653–666 (ETVTVEEFLMNSYS) match the GBA motif. The interval 668–690 (AAPSTSTAPAPPKAPVTAPPAPQ) is disordered. The segment covering 676-689 (PAPPKAPVTAPPAP) has biased composition (pro residues).

As to quaternary structure, interacts (via GBA motif) with guanine nucleotide-binding protein G(o) subunit alpha goa-1 (in GDP-bound form); the interaction leads to activation of goa-1. Expressed in some neurons including the head and tail neurons, HSN and VC, in a subset of glial cells, in the distal tips cells and in the intestine.

In terms of biological role, acts as a non-receptor guanine nucleotide exchange factor which binds to and activates G-protein alpha subunit goa-1. The protein is G-protein alpha subunit activating protein gbas-1 of Caenorhabditis elegans.